The chain runs to 704 residues: 1,4-alpha-glucan-branching enzyme (704 aa).

Tryptophan 94 and lysine 131 together coordinate (1,4-alpha-D-glucosyl)n. Serine 190 is modified (phosphoserine). Aspartate 356 serves as the catalytic Nucleophile. Residue glutamate 417 is the Proton donor of the active site.

This sequence belongs to the glycosyl hydrolase 13 family. GlgB subfamily.

The protein localises to the cytoplasm. It carries out the reaction Transfers a segment of a (1-&gt;4)-alpha-D-glucan chain to a primary hydroxy group in a similar glucan chain.. It functions in the pathway glycan biosynthesis; glycogen biosynthesis. Functionally, glycogen-branching enzyme participates in the glycogen biosynthetic process along with glycogenin and glycogen synthase. Generates alpha-1,6-glucosidic branches from alpha-1,4-linked glucose chains, to increase solubility of the glycogen polymer. This Saccharomyces cerevisiae (strain ATCC 204508 / S288c) (Baker's yeast) protein is 1,4-alpha-glucan-branching enzyme (GLC3).